The chain runs to 239 residues: Probable transcriptional regulatory protein BCQ_0605 (239 aa).

The protein belongs to the TACO1 family. YeeN subfamily.

The protein resides in the cytoplasm. This chain is Probable transcriptional regulatory protein BCQ_0605, found in Bacillus cereus (strain Q1).